The following is a 240-amino-acid chain: Histidinol dehydrogenase homolog oryD (240 aa).

2 residues coordinate Zn(2+): Gln64 and His67. The active-site Proton acceptor is the Glu134. Residues Asp168 and His228 each contribute to the Zn(2+) site.

Belongs to the histidinol dehydrogenase family. Zn(2+) is required as a cofactor.

It participates in secondary metabolite biosynthesis. Its function is as follows. Histidinol dehydrogenase homolog; part of the gene cluster that mediates the biosynthesis of oryzines, natural products with an unusual maleidride backbone. The two subunits of the fungal fatty acid synthase oryfasA and oryfasB probably form octenoic acid. This fatty acid is most likely activated by the acyl-CoA ligase oryP to give octenyl-CoA before the citrate synthase-like protein oryE catalyzes condensation with oxaloacetate to form tricarboxylic acid. The next steps of the pathways are conjectural, but a favorite possible route has been proposed, beginning with decarboxylation and concomitant dehydration by the decarboxylase oryM, followed by tautomerization, which may lead to the production of a diene intermediate. Reduction of this diene intermediate could give the known metabolite piliformic acid. On the pathway to oryzine B and oryzine A, however, hydroxylation of the diene by the alpha-ketoglutarate-dependent dioxygenase oryG and lactonisation by the lactonohydrolases oryH or oryL could give oryzine B directly. Finally, enoyl reduction by the dehydrogenase oryD would then convert oryzine B into oryzine A. The protein is Histidinol dehydrogenase homolog oryD of Aspergillus oryzae (strain ATCC 42149 / RIB 40) (Yellow koji mold).